The primary structure comprises 93 residues: Aspartyl/glutamyl-tRNA(Asn/Gln) amidotransferase subunit C (93 aa).

It belongs to the GatC family. As to quaternary structure, heterotrimer of A, B and C subunits.

It catalyses the reaction L-glutamyl-tRNA(Gln) + L-glutamine + ATP + H2O = L-glutaminyl-tRNA(Gln) + L-glutamate + ADP + phosphate + H(+). The enzyme catalyses L-aspartyl-tRNA(Asn) + L-glutamine + ATP + H2O = L-asparaginyl-tRNA(Asn) + L-glutamate + ADP + phosphate + 2 H(+). Allows the formation of correctly charged Asn-tRNA(Asn) or Gln-tRNA(Gln) through the transamidation of misacylated Asp-tRNA(Asn) or Glu-tRNA(Gln) in organisms which lack either or both of asparaginyl-tRNA or glutaminyl-tRNA synthetases. The reaction takes place in the presence of glutamine and ATP through an activated phospho-Asp-tRNA(Asn) or phospho-Glu-tRNA(Gln). The protein is Aspartyl/glutamyl-tRNA(Asn/Gln) amidotransferase subunit C of Methanothrix thermoacetophila (strain DSM 6194 / JCM 14653 / NBRC 101360 / PT) (Methanosaeta thermophila).